Consider the following 484-residue polypeptide: Probable cobyric acid synthase (484 aa).

The GATase cobBQ-type domain occupies 247-433 (ELHIQIVKLP…LHGIFHNFAF (187 aa)). Cys-325 (nucleophile) is an active-site residue. The active site involves His-425.

Belongs to the CobB/CobQ family. CobQ subfamily.

The protein operates within cofactor biosynthesis; adenosylcobalamin biosynthesis. Catalyzes amidations at positions B, D, E, and G on adenosylcobyrinic A,C-diamide. NH(2) groups are provided by glutamine, and one molecule of ATP is hydrogenolyzed for each amidation. The sequence is that of Probable cobyric acid synthase from Thermococcus onnurineus (strain NA1).